An 85-amino-acid chain; its full sequence is MVPRDLVATLLCAMCIVQATMPSLDNYLYIIKRIKLCNDDYKNYCLNNGTCFTVALNNVSLNPFCACHINYVGSRCQFINLITIK.

Residues Met1–Ala19 form the signal peptide. One can recognise an EGF-like domain in the interval Arg33–Gln77. Disulfide bonds link Cys37/Cys51, Cys45/Cys65, and Cys67/Cys76. N-linked (GlcNAc...) asparagine; by host glycans are attached at residues Asn48 and Asn58.

The protein resides in the secreted. Its function is as follows. Stimulates the growth of some tissues. In Oryctolagus cuniculus (Rabbit), this protein is Growth factor (MGF).